Consider the following 392-residue polypeptide: Formate-dependent phosphoribosylglycinamide formyltransferase (392 aa).

Residues 22–23 (EL) and Glu-82 contribute to the N(1)-(5-phospho-beta-D-ribosyl)glycinamide site. ATP is bound by residues Arg-114, Lys-155, 160 to 165 (SSGKGQ), 195 to 198 (EGVV), and Glu-203. The region spanning 119–308 (RLAAEELQLP…EFALHVRAFL (190 aa)) is the ATP-grasp domain. Mg(2+) contacts are provided by Glu-267 and Glu-279. Residues Asp-286, Lys-355, and 362 to 363 (RR) contribute to the N(1)-(5-phospho-beta-D-ribosyl)glycinamide site.

Belongs to the PurK/PurT family. As to quaternary structure, homodimer.

The catalysed reaction is N(1)-(5-phospho-beta-D-ribosyl)glycinamide + formate + ATP = N(2)-formyl-N(1)-(5-phospho-beta-D-ribosyl)glycinamide + ADP + phosphate + H(+). Its pathway is purine metabolism; IMP biosynthesis via de novo pathway; N(2)-formyl-N(1)-(5-phospho-D-ribosyl)glycinamide from N(1)-(5-phospho-D-ribosyl)glycinamide (formate route): step 1/1. Its function is as follows. Involved in the de novo purine biosynthesis. Catalyzes the transfer of formate to 5-phospho-ribosyl-glycinamide (GAR), producing 5-phospho-ribosyl-N-formylglycinamide (FGAR). Formate is provided by PurU via hydrolysis of 10-formyl-tetrahydrofolate. The sequence is that of Formate-dependent phosphoribosylglycinamide formyltransferase from Escherichia coli O1:K1 / APEC.